The chain runs to 564 residues: Ferric reductase transmembrane component 1 (564 aa).

Residue Asn-4 is glycosylated (N-linked (GlcNAc...) asparagine). A run of 2 helical transmembrane segments spans residues 10-30 (TVIA…MFWL) and 73-93 (VILT…FIGM). Asn-111 carries an N-linked (GlcNAc...) asparagine glycan. Residues 117–137 (VAARLGFLACGLYVTSYFFSI) traverse the membrane as a helical segment. One can recognise a Ferric oxidoreductase domain in the interval 121-254 (LGFLACGLYV…VYMKVCVAVY (134 aa)). His-157 and His-171 together coordinate heme. Transmembrane regions (helical) follow at residues 160–180 (LSQY…GLAA) and 193–213 (IIGY…LPFF). The heme site is built by His-225 and His-239. One can recognise an FAD-binding FR-type domain in the interval 255 to 410 (VFDRGCRMLR…DGPYGPVSNP (156 aa)). A glycan (N-linked (GlcNAc...) asparagine) is linked at Asn-268. 317-323 (HPFTIAS) is a binding site for FAD. A glycan (N-linked (GlcNAc...) asparagine) is linked at Asn-360. Ser-362, Ser-381, and Ser-383 each carry phosphoserine. The chain crosses the membrane as a helical span at residues 417–437 (LFLFAGGVGVSYILPIILDTI). Position 419-427 (419-427 (LFAGGVGVS)) interacts with NAD(+). N-linked (GlcNAc...) asparagine glycosylation occurs at Asn-501.

The protein belongs to the ferric reductase (FRE) family. The cofactor is FAD. Heme is required as a cofactor.

Its subcellular location is the cell membrane. The catalysed reaction is 2 a Fe(II)-siderophore + NADP(+) + H(+) = 2 a Fe(III)-siderophore + NADPH. Its function is as follows. Metalloreductase responsible for reducing extracellular iron and copper prior to import. Catalyzes the reductive uptake of Fe(3+)-salts and Fe(3+) bound to catecholate or hydroxamate siderophores. Fe(3+) is reduced to Fe(2+), which then dissociates from the siderophore and can be imported by the high-affinity Fe(2+) transport complex in the plasma membrane. Also participates in Cu(2+) reduction and Cu(+) uptake. This is Ferric reductase transmembrane component 1 (frp1) from Schizosaccharomyces pombe (strain 972 / ATCC 24843) (Fission yeast).